A 148-amino-acid polypeptide reads, in one-letter code: Single-stranded DNA-binding protein, mitochondrial (148 aa).

Residues 1 to 16 constitute a mitochondrion transit peptide; sequence MFRRPVVQVLRQFVRH. The SSB domain maps to 30 to 141; the sequence is LNRVQLLGRV…IIADNIIFLS (112 aa). Phosphoserine is present on residues serine 67 and serine 79. Lysine 113 is subject to N6-acetyllysine. Residue lysine 122 is modified to N6-succinyllysine.

As to quaternary structure, homotetramer. Interacts with MPG/AAG, through inhibition of its glycosylase activity it potentially prevents formation of DNA breaks in ssDNA, ensuring that base removal primarily occurs in dsDNA. Interacts with POLDIP2. Interacts with PRIMPOL.

It localises to the mitochondrion. It is found in the mitochondrion matrix. Its subcellular location is the mitochondrion nucleoid. Functionally, binds preferentially and cooperatively to pyrimidine rich single-stranded DNA (ss-DNA). In vitro, required to maintain the copy number of mitochondrial DNA (mtDNA) and plays a crucial role during mtDNA replication by stimulating the activity of the replisome components POLG and TWNK at the replication fork. Promotes the activity of the gamma complex polymerase POLG, largely by organizing the template DNA and eliminating secondary structures to favor ss-DNA conformations that facilitate POLG activity. In addition it is able to promote the 5'-3' unwinding activity of the mtDNA helicase TWNK. May also function in mtDNA repair. This chain is Single-stranded DNA-binding protein, mitochondrial (SSBP1), found in Bos taurus (Bovine).